Consider the following 411-residue polypeptide: Trigger factor (411 aa).

Residues 162 to 240 form the PPIase FKBP-type domain; sequence EDLVVIDYTT…IKEVKRRQNI (79 aa).

The protein belongs to the FKBP-type PPIase family. Tig subfamily.

It is found in the cytoplasm. The enzyme catalyses [protein]-peptidylproline (omega=180) = [protein]-peptidylproline (omega=0). In terms of biological role, involved in protein export. Acts as a chaperone by maintaining the newly synthesized protein in an open conformation. Functions as a peptidyl-prolyl cis-trans isomerase. In Thermodesulfovibrio yellowstonii (strain ATCC 51303 / DSM 11347 / YP87), this protein is Trigger factor.